Consider the following 208-residue polypeptide: Small ribosomal subunit protein uS4 (208 aa).

The S4 RNA-binding domain maps to 98–161 (RRLDNVIYRL…RKMPVIAEAQ (64 aa)).

The protein belongs to the universal ribosomal protein uS4 family. As to quaternary structure, part of the 30S ribosomal subunit. Contacts protein S5. The interaction surface between S4 and S5 is involved in control of translational fidelity.

Functionally, one of the primary rRNA binding proteins, it binds directly to 16S rRNA where it nucleates assembly of the body of the 30S subunit. Its function is as follows. With S5 and S12 plays an important role in translational accuracy. The chain is Small ribosomal subunit protein uS4 from Oleidesulfovibrio alaskensis (strain ATCC BAA-1058 / DSM 17464 / G20) (Desulfovibrio alaskensis).